We begin with the raw amino-acid sequence, 113 residues long: UPF0251 protein Teth514_1147 (113 aa).

The protein belongs to the UPF0251 family.

In Thermoanaerobacter sp. (strain X514), this protein is UPF0251 protein Teth514_1147.